The primary structure comprises 517 residues: Probable bifunctional methylthioribulose-1-phosphate dehydratase/enolase-phosphatase E1 1 (517 aa).

The interval 1–240 is methylthioribulose-1-phosphate dehydratase; that stretch reads MAAAALNGLK…AIKLYQLGLD (240 aa). Cysteine 112 lines the substrate pocket. Histidine 130 and histidine 132 together coordinate Zn(2+). Glutamate 155 acts as the Proton donor/acceptor; for methylthioribulose-1-phosphate dehydratase activity in catalysis. Zn(2+) is bound at residue histidine 205. Residues 278–517 are enolase-phosphatase E1; sequence IVLDIEGTTT…FKTITSFSDI (240 aa). Mg(2+) contacts are provided by aspartate 281 and glutamate 283. Substrate contacts are provided by residues 416-417 and lysine 450; that span reads SS. Aspartate 476 lines the Mg(2+) pocket.

In the N-terminal section; belongs to the aldolase class II family. MtnB subfamily. It in the C-terminal section; belongs to the HAD-like hydrolase superfamily. MasA/MtnC family. Requires Zn(2+) as cofactor. Mg(2+) serves as cofactor.

The enzyme catalyses 5-(methylsulfanyl)-D-ribulose 1-phosphate = 5-methylsulfanyl-2,3-dioxopentyl phosphate + H2O. The catalysed reaction is 5-methylsulfanyl-2,3-dioxopentyl phosphate + H2O = 1,2-dihydroxy-5-(methylsulfanyl)pent-1-en-3-one + phosphate. The protein operates within amino-acid biosynthesis; L-methionine biosynthesis via salvage pathway; L-methionine from S-methyl-5-thio-alpha-D-ribose 1-phosphate: step 2/6. It participates in amino-acid biosynthesis; L-methionine biosynthesis via salvage pathway; L-methionine from S-methyl-5-thio-alpha-D-ribose 1-phosphate: step 3/6. Its pathway is amino-acid biosynthesis; L-methionine biosynthesis via salvage pathway; L-methionine from S-methyl-5-thio-alpha-D-ribose 1-phosphate: step 4/6. This chain is Probable bifunctional methylthioribulose-1-phosphate dehydratase/enolase-phosphatase E1 1, found in Vitis vinifera (Grape).